The sequence spans 309 residues: Pantothenate synthetase (309 aa).

Residue Thr2 is modified to N-acetylthreonine. 40–47 (MGALHEGH) provides a ligand contact to ATP. Catalysis depends on His47, which acts as the Proton donor. Gln72 contacts (R)-pantoate. Residue Gln72 participates in beta-alanine binding. Mg(2+) is bound by residues Asp88, Asp89, and Gln92. 158-161 (GEKD) contacts ATP. Gln164 contacts (R)-pantoate. ATP-binding positions include Val187 and 195 to 198 (MSSR).

It belongs to the pantothenate synthetase family.

It is found in the cytoplasm. The catalysed reaction is (R)-pantoate + beta-alanine + ATP = (R)-pantothenate + AMP + diphosphate + H(+). The protein operates within cofactor biosynthesis; (R)-pantothenate biosynthesis; (R)-pantothenate from (R)-pantoate and beta-alanine: step 1/1. With respect to regulation, pantothenate exhibits uncompetitive inhibition toward both D-pantoate and ATP, and non-competitive inhibition toward beta-alanine. AMPCPP exhibits competitive inhibition toward ATP, uncompetitive inhibition toward beta-alanine, and non-competitive inhibition toward D-pantoate. The enzyme is most active in the presence of magnesium or manganese. Other divalent cations (cobalt, nickel, zinc) are less effective. Catalyzes the condensation of pantoate with beta-alanine in an ATP-dependent reaction via a pantoyl-adenylate intermediate. The chain is Pantothenate synthetase (panC) from Mycobacterium tuberculosis (strain ATCC 25618 / H37Rv).